The chain runs to 239 residues: Serine protease SplC (239 aa).

A signal peptide spans methionine 1–alanine 36. Residues histidine 75, aspartate 113, and serine 193 each act as charge relay system in the active site.

The protein belongs to the peptidase S1B family.

Its subcellular location is the secreted. The chain is Serine protease SplC (splC) from Staphylococcus aureus.